A 123-amino-acid polypeptide reads, in one-letter code: Large ribosomal subunit protein uL18 (123 aa).

The protein belongs to the universal ribosomal protein uL18 family. In terms of assembly, part of the 50S ribosomal subunit; part of the 5S rRNA/L5/L18/L25 subcomplex. Contacts the 5S and 23S rRNAs.

Its function is as follows. This is one of the proteins that bind and probably mediate the attachment of the 5S RNA into the large ribosomal subunit, where it forms part of the central protuberance. The protein is Large ribosomal subunit protein uL18 of Chlamydia abortus (strain DSM 27085 / S26/3) (Chlamydophila abortus).